Reading from the N-terminus, the 257-residue chain is Hydroxyacylglutathione hydrolase (257 aa).

Zn(2+)-binding residues include H54, H56, D58, H59, H113, D137, and H175.

Belongs to the metallo-beta-lactamase superfamily. Glyoxalase II family. As to quaternary structure, monomer. Requires Zn(2+) as cofactor.

It catalyses the reaction an S-(2-hydroxyacyl)glutathione + H2O = a 2-hydroxy carboxylate + glutathione + H(+). It functions in the pathway secondary metabolite metabolism; methylglyoxal degradation; (R)-lactate from methylglyoxal: step 2/2. Thiolesterase that catalyzes the hydrolysis of S-D-lactoyl-glutathione to form glutathione and D-lactic acid. This chain is Hydroxyacylglutathione hydrolase, found in Trichodesmium erythraeum (strain IMS101).